Reading from the N-terminus, the 67-residue chain is Large ribosomal subunit protein bL32 (67 aa).

The segment covering 1–19 (MAVPKRKMSRSNTRARRSQ) has biased composition (basic residues). The disordered stretch occupies residues 1-21 (MAVPKRKMSRSNTRARRSQWK).

It belongs to the bacterial ribosomal protein bL32 family.

This Clavibacter sepedonicus (Clavibacter michiganensis subsp. sepedonicus) protein is Large ribosomal subunit protein bL32.